A 618-amino-acid chain; its full sequence is Probable arginine--tRNA ligase, cytoplasmic (618 aa).

2 interaction with tRNA regions span residues 60–61 and 104–109; these read ET and NGIFLR. L-arginine contacts are provided by residues 146–151, His160, Tyr359, Asp363, and Gln387; that span reads EFSSPN. A 'HIGH' region motif is present at residues 149–160; sequence SPNIAKPFHAGH. Residues 496-510 form an interaction with tRNA region; it reads DTGPYLQYAHSRLSS.

It belongs to the class-I aminoacyl-tRNA synthetase family.

It is found in the cytoplasm. It carries out the reaction tRNA(Arg) + L-arginine + ATP = L-arginyl-tRNA(Arg) + AMP + diphosphate. In terms of biological role, forms part of a macromolecular complex that catalyzes the attachment of specific amino acids to cognate tRNAs during protein synthesis. This Schizosaccharomyces pombe (strain 972 / ATCC 24843) (Fission yeast) protein is Probable arginine--tRNA ligase, cytoplasmic (mrs1).